A 443-amino-acid polypeptide reads, in one-letter code: Histidinol dehydrogenase (443 aa).

NAD(+)-binding residues include Tyr-133, Gln-191, and Asn-214. Positions 240, 262, and 265 each coordinate substrate. Zn(2+)-binding residues include Gln-262 and His-265. Catalysis depends on proton acceptor residues Glu-329 and His-330. Positions 330, 363, 417, and 422 each coordinate substrate. Zn(2+) is bound at residue Asp-363. His-422 is a Zn(2+) binding site.

Belongs to the histidinol dehydrogenase family. As to quaternary structure, homodimer. Requires Zn(2+) as cofactor.

It catalyses the reaction L-histidinol + 2 NAD(+) + H2O = L-histidine + 2 NADH + 3 H(+). It functions in the pathway amino-acid biosynthesis; L-histidine biosynthesis; L-histidine from 5-phospho-alpha-D-ribose 1-diphosphate: step 9/9. Catalyzes the sequential NAD-dependent oxidations of L-histidinol to L-histidinaldehyde and then to L-histidine. The sequence is that of Histidinol dehydrogenase from Blochmanniella pennsylvanica (strain BPEN).